Reading from the N-terminus, the 642-residue chain is MGHVDREDLLNVIRHELRLEDDDGPGLCSRLLLNPDRKCRAGGLPLDFRLKNGDLMDDGDAGFDDIYEIPLYEEPIHTRTLINDSLALRTAEKIKEEGRRDNFYTGPLDELFVKQEVNWPPKTPISTEKSAIERYLEENSANLNNPLGEYSKFAATTTDPSRQIEIIIPMSCDEEIGFKTLKIEVLTTARIREVIGYCLLQYYLTFDSYLPGEVDDYQFYLAEEDGEIEHELPPLDSSKLVGQVGFTCLGLVSRIKKNGNSRQKRAVAVWFVDKDQYVIEVDNMEKPLRWLRDEAFRLREETVKEREPLFQGLLDIKEYYMEAVDNFDVKLDLEASISSARSLEFVMIRKNSSRAGFHPRGGRYGRQMSAMLTLKMPNSPIAAGPMTPLPTVMEESPAVAGTSNGFGFPKAESCGAIASTPGVTWNDDGGQLSSFIVQRIHKFKPKWKANLIFRWTCFEIEKYREDRSAFLPQGYQKHTKVPWEYVGGVRTQLKDAKAGRVDMWQITFFWLPVLSDETVKDVIGDAEWNLNLVAKIYANEEKWRSVTLETFFKQDVDEIFSQTNSILQARDASIYKAFSHSSFGTLSPAASADLALMESAEAIVSPSSDAPSRSSNGKNGGKFRKMSSLMASVMGRRKSDSK.

Positions 189 to 314 (ARIREVIGYC…EREPLFQGLL (126 aa)) constitute a CRIM domain. The interval 603-642 (IVSPSSDAPSRSSNGKNGGKFRKMSSLMASVMGRRKSDSK) is disordered. A compositionally biased stretch (low complexity) spans 605–615 (SPSSDAPSRSS).

The protein belongs to the SIN1 family. In terms of assembly, component of the target of rapamycin complex 2 (TORC2).

Its function is as follows. Component of the target of rapamycin complex 2 (TORC2), which transduces signals from growth factors to pathways involved in proliferation, cytoskeletal organization and anabolic output. In response to growth factors, TORC2 phosphorylates and activates AGC protein kinase family members, such as Akt1. Within the TORC2 complex, sinh-1 acts as a substrate adapter which recognizes and binds AGC protein kinase family members for phosphorylation by mTor. The protein is Stress-activated map kinase-interacting protein 1 homolog (sinh-1) of Caenorhabditis elegans.